Consider the following 397-residue polypeptide: DNA-directed RNA polymerase subunit Rpo1C (397 aa).

This sequence belongs to the RNA polymerase beta' chain family. Part of the RNA polymerase complex.

The protein resides in the cytoplasm. It catalyses the reaction RNA(n) + a ribonucleoside 5'-triphosphate = RNA(n+1) + diphosphate. Functionally, DNA-dependent RNA polymerase (RNAP) catalyzes the transcription of DNA into RNA using the four ribonucleoside triphosphates as substrates. Forms part of the jaw domain. The sequence is that of DNA-directed RNA polymerase subunit Rpo1C from Halobacterium salinarum (strain ATCC 29341 / DSM 671 / R1).